The sequence spans 577 residues: Arginine--tRNA ligase (577 aa).

The 'HIGH' region motif lies at 132–142; that stretch reads ANPTGPLHVGH.

It belongs to the class-I aminoacyl-tRNA synthetase family. Monomer.

The protein localises to the cytoplasm. The enzyme catalyses tRNA(Arg) + L-arginine + ATP = L-arginyl-tRNA(Arg) + AMP + diphosphate. The polypeptide is Arginine--tRNA ligase (Pelagibacter ubique (strain HTCC1062)).